A 230-amino-acid chain; its full sequence is Ribonuclease 3 (230 aa).

Positions M1–G134 constitute an RNase III domain. E47 lines the Mg(2+) pocket. D51 is a catalytic residue. Mg(2+) contacts are provided by D120 and E123. The active site involves E123. Positions D160–E229 constitute a DRBM domain.

Belongs to the ribonuclease III family. In terms of assembly, homodimer. The cofactor is Mg(2+).

It localises to the cytoplasm. It catalyses the reaction Endonucleolytic cleavage to 5'-phosphomonoester.. Digests double-stranded RNA. Involved in the processing of primary rRNA transcript to yield the immediate precursors to the large and small rRNAs (23S and 16S). Processes some mRNAs, and tRNAs when they are encoded in the rRNA operon. Processes pre-crRNA and tracrRNA of type II CRISPR loci if present in the organism. The protein is Ribonuclease 3 of Streptococcus pyogenes serotype M2 (strain MGAS10270).